Here is a 174-residue protein sequence, read N- to C-terminus: Ribosome maturation factor RimM (174 aa).

One can recognise a PRC barrel domain in the interval 96–170 (PDEFYDHELE…YVVIDPPEGL (75 aa)).

The protein belongs to the RimM family. As to quaternary structure, binds ribosomal protein uS19.

It is found in the cytoplasm. Functionally, an accessory protein needed during the final step in the assembly of 30S ribosomal subunit, possibly for assembly of the head region. Essential for efficient processing of 16S rRNA. May be needed both before and after RbfA during the maturation of 16S rRNA. It has affinity for free ribosomal 30S subunits but not for 70S ribosomes. The polypeptide is Ribosome maturation factor RimM (Nocardia farcinica (strain IFM 10152)).